Consider the following 544-residue polypeptide: Chaperonin GroEL 1 (544 aa).

Residues 29 to 32 (TLGP), 86 to 90 (DGTTT), G413, 479 to 481 (NAA), and D495 contribute to the ATP site.

This sequence belongs to the chaperonin (HSP60) family. Forms a cylinder of 14 subunits composed of two heptameric rings stacked back-to-back. Interacts with the co-chaperonin GroES.

The protein localises to the cytoplasm. The catalysed reaction is ATP + H2O + a folded polypeptide = ADP + phosphate + an unfolded polypeptide.. In terms of biological role, together with its co-chaperonin GroES, plays an essential role in assisting protein folding. The GroEL-GroES system forms a nano-cage that allows encapsulation of the non-native substrate proteins and provides a physical environment optimized to promote and accelerate protein folding. This chain is Chaperonin GroEL 1, found in Synechococcus sp. (strain CC9902).